We begin with the raw amino-acid sequence, 142 residues long: HTH-type transcriptional regulator LrpA1 (142 aa).

Residues 1–72 (MSTESTEERI…GQSIAMVGID (72 aa)) enclose the HTH asnC-type domain. The segment at residues 22-41 (YAAIAERADVSKPTVRKYID) is a DNA-binding region (H-T-H motif).

Transcription factor that regulates genes involved in amino acid metabolism. Represses the aspB3 gene, coding for an aspartate transaminase, in the presence of L-aspartate. Another target gene is the basal transcriptional regulator tfbB. Also binds its own promoter. The chain is HTH-type transcriptional regulator LrpA1 (lrpA1) from Halobacterium salinarum (strain ATCC 29341 / DSM 671 / R1).